The following is a 331-amino-acid chain: 6-phosphogluconolactonase (331 aa).

Belongs to the cycloisomerase 2 family.

It carries out the reaction 6-phospho-D-glucono-1,5-lactone + H2O = 6-phospho-D-gluconate + H(+). It participates in carbohydrate degradation; pentose phosphate pathway; D-ribulose 5-phosphate from D-glucose 6-phosphate (oxidative stage): step 2/3. Functionally, catalyzes the hydrolysis of 6-phosphogluconolactone to 6-phosphogluconate. The polypeptide is 6-phosphogluconolactonase (Salmonella typhi).